The sequence spans 78 residues: MSRVCQVTGKRPAVGNNRSHAMNATRRRFLPNLHTHRFWVESEKRFVTLRLTAKGMRIIDKKGIDAVLAEIRARGEKI.

The protein belongs to the bacterial ribosomal protein bL28 family.

The protein is Large ribosomal subunit protein bL28 of Histophilus somni (strain 129Pt) (Haemophilus somnus).